The primary structure comprises 587 residues: DELLA protein RGA (587 aa).

The interval 1–26 is disordered; the sequence is MKRDHHQFQGRLSNHGTSSSSSSISK. Positions 44–48 match the DELLA motif motif; the sequence is DELLA. An LEXLE motif motif is present at residues 66–70; that stretch reads LEQLE. A VHYNP motif motif is present at residues 89–93; sequence VHYNP. Positions 152–181 are disordered; sequence IDSSSSSNNQNKRLKSCSSPDSMVTSTSTG. Polar residues predominate over residues 153–175; that stretch reads DSSSSSNNQNKRLKSCSSPDSMV. The GRAS domain occupies 212-581; the sequence is VDSQENGVRL…RPLITTSAWK (370 aa). Positions 219-273 are leucine repeat I (LRI); that stretch reads VRLVHALMACAEAIQQNNLTLAEALVKQIGCLAVSQAGAMRKVATYFAEALARRI. The tract at residues 292–357 is VHIID; sequence QMHFYETCPY…GGPPTFRLTG (66 aa). Positions 323-327 match the VHIID motif; the sequence is VHVID. Residues 371–403 are leucine repeat II (LRII); it reads EVGCKLAQLAEAIHVEFEYRGFVANSLADLDAS. The tract at residues 415-502 is PFYRE; that stretch reads VAVNSVFELH…EVYLGKQICN (88 aa). The short motif at 423-427 is the LXXLL motif element; that stretch reads LHKLL. The segment at 505–581 is SAW; that stretch reads ACEGPDRVER…RPLITTSAWK (77 aa).

This sequence belongs to the GRAS family. DELLA subfamily. As to quaternary structure, interacts directly with the GID2/SLY1 component of the SCF(GID2) complex. Interacts (via N-terminus) with GID1A, GID1B and GID1B (via N-terminus). Binds to bHLH transcription factors such as MYC2, PIF1, PIF4, PIF6 and SPT. Interacts with the BOI proteins BOI, BRG1, BRG2 and BRG3. Interacts with NFYC9. Interacts with TOPP4. Interacts with FLZ5. Binds to zinc finger proteins MGP/IDD3, IDD4, IDD5, BIB/IDD9 and JKD/IDD10 in the nucleus. Binds to and coactivates GAF1/IDD2 and ENY/IDD1. Binds to PDF2 and ATML1. Post-translationally, phosphorylated. Phosphorylation may increase the interaction with GID2. In terms of processing, gibberellin (GA) induces dephosphorylation of RGA by TOPP4 and subsequent degradation by the proteasomal pathway. Ubiquitinated. Upon GA application it is ubiquitinated by the SCF(GID2) complex, leading to its subsequent degradation. Post-translationally, O-fucosylated by SPY. O-fucosylation enhances RGA activity by promoting RGA binding to key transcription factors in brassinosteroid and light signaling pathways. As to expression, ubiquitously expressed. Expressed in roots, rosette leaves, bolting and mature stems, young and mature siliques, flower buds and influorescences.

The protein localises to the nucleus. Functionally, probable transcriptional regulator that acts as a repressor of the gibberellin (GA) signaling pathway. Probably acts by participating in large multiprotein complexes that repress transcription of GA-inducible genes. Positively regulates XERICO expression in seeds. Upon GA application, it is degraded by the proteasome, allowing the GA signaling pathway. Compared to other DELLA proteins, it is the most sensitive to GA application. No effect of the BOI proteins on its stability. Its activity is probably regulated by other phytohormones such as auxin and ethylene, attenuation of auxin transport delaying its GA-induced degradation. Involved in the regulation of seed dormancy and germination, including glucose-induced delay of seed germination. This chain is DELLA protein RGA, found in Arabidopsis thaliana (Mouse-ear cress).